Consider the following 307-residue polypeptide: NmrA-like family domain-containing oxidoreductase flvB (307 aa).

NADP(+)-binding positions include 4-9 (LITGAT), 32-36 (SSSSP), 53-54 (DY), 74-76 (STN), and 148-151 (YVEG).

Belongs to the NmrA-type oxidoreductase family.

It catalyses the reaction (2S)-5,5-dimethyl-2,3,4,5-tetrahydropyridine-2,6-dicarboxylate + NADPH + 2 H(+) = (6S)-3,3-dimethylpiperidine-2,6-dicarboxylate + NADP(+). The enzyme catalyses (2S)-5,5-dimethyl-2,3,4,5-tetrahydropyridine-2,6-dicarboxylate + NADH + 2 H(+) = (6S)-3,3-dimethylpiperidine-2,6-dicarboxylate + NAD(+). It functions in the pathway secondary metabolite biosynthesis; terpenoid biosynthesis. Functionally, nmrA-like family domain-containing oxidoreductase; part of the gene cluster that mediates the biosynthesis of flavunoidine, an alkaloidal terpenoid with a tetracyclic cage-like core connected to dimethylcadaverine via a C-N bond and acylated with 5,5-dimethyl-L-pipecolate. The tetracyclic core is synthesized by the terpene cyclase flvE and the cytochrome P450 monooxygenase flvD. The terpene cyclase flvE catalyzes the cyclization of farnesyl pyrophosphate (FPP) to form (1R,4R,5S)-(+)-acoradiene and the cytochrome P450 monooxygenase flvD is then responsible for oxidative conversion of (1R,4R,5S)-(+)-acoradiene into the tetracyclic cage present in the final product flavunoidine. In parallel, the N-methyltransferase flvH dimethylates L-lysine to give N,N-dimethyl-L-Lysin which is decarboxylated by flvG to afford dimethylcadaverine. The terpene cyclase-like protein flvF is the enzyme that attaches the dimethylcadaverine precusor at the C-7 of the tetracyclic cage to yield pre-flavunoidine. The cytochrome monooxygenase flvC hydroxylates the C-10 position of pre-flavunoidine whereas the NRPS flvI acylates the terpenoid core at the hydroxylated C-10 with dimethylpipecolate to yield final flavunoidine. The bifunctional enzyme flvA and the dehydrogenase flvB are responsible for the synthesis of the dimethylpipecolate precursor. The PLP-dependent lyase domain of flvA might use L-O-acetyl-homoserine and alpha-keto-isovalerate to form an intermediary ketone that can cyclize intramolecularly to yield an imine. The imine can be reduced by flvB to yield the 6-carboxylated pipecolate. The C-terminal alpha-KG-dependent oxygenase domain of flvA is then proposed to catalyze the decarboxylation to yield dimethylpipecolate. This chain is NmrA-like family domain-containing oxidoreductase flvB, found in Aspergillus flavus (strain ATCC 200026 / FGSC A1120 / IAM 13836 / NRRL 3357 / JCM 12722 / SRRC 167).